We begin with the raw amino-acid sequence, 1002 residues long: E3 ubiquitin-protein ligase BRE1B (1002 aa).

The tract at residues 1 to 32 (MSGLSNKRAAGDGGSGPPEKKLNREEKTTTTL) is disordered. The span at 18-28 (PEKKLNREEKT) shows a compositional bias: basic and acidic residues. Lys20 bears the N6-acetyllysine mark. Ser42 is subject to Phosphoserine. The stretch at 55–91 (KNKKLAERLEQRQACEDELRERIEKLEKRQATDDATL) forms a coiled coil. The interval 120–148 (SSGTEVPGCQEGLTRDVIPRTDPGTSDLR) is disordered. 2 coiled-coil regions span residues 190-378 (KAAV…LRSL) and 438-526 (LQKK…ASGS). 2 positions are modified to N6-acetyllysine: Lys356 and Lys518. Disordered regions lie at residues 520-562 (RAQA…PDSK) and 579-652 (KKEE…ESEL). Residues Lys579 and Lys580 each participate in a glycyl lysine isopeptide (Lys-Gly) (interchain with G-Cter in SUMO2) cross-link. 2 positions are modified to phosphoserine: Ser585 and Ser586. 2 stretches are compositionally biased toward basic and acidic residues: residues 603-620 (RGRE…EREG) and 634-652 (RADR…ESEL). Residues 628-947 (AASTLSRADR…EEIKEYKARL (320 aa)) adopt a coiled-coil conformation. Residues 949–988 (CPCCNTRKKDAVLTKCFHVFCFECVRGRYEARQRKCPKCN) form an RING-type zinc finger.

The protein belongs to the BRE1 family. In terms of assembly, component of the RNF20/40 complex (also known as BRE1 complex) probably composed of 2 copies of RNF20/BRE1A and 2 copies of RNF40/BRE1B. Interacts with UBE2E1/UBCH6. Interacts with RB1 and WAC. May interact with STX1A. In terms of tissue distribution, ubiquitously expressed. Expressed in brain, testis, heart, liver and kidney. Weakly expressed in lung, spleen and skeletal muscle (at protein level).

The protein resides in the nucleus. It catalyses the reaction S-ubiquitinyl-[E2 ubiquitin-conjugating enzyme]-L-cysteine + [acceptor protein]-L-lysine = [E2 ubiquitin-conjugating enzyme]-L-cysteine + N(6)-ubiquitinyl-[acceptor protein]-L-lysine.. The protein operates within protein modification; protein ubiquitination. Its function is as follows. Component of the RNF20/40 E3 ubiquitin-protein ligase complex that mediates monoubiquitination of 'Lys-120' of histone H2B (H2BK120ub1). H2BK120ub1 gives a specific tag for epigenetic transcriptional activation and is also prerequisite for histone H3 'Lys-4' and 'Lys-79' methylation (H3K4me and H3K79me, respectively). It thereby plays a central role in histone code and gene regulation. The RNF20/40 complex forms a H2B ubiquitin ligase complex in cooperation with the E2 enzyme UBE2A or UBE2B; reports about the cooperation with UBE2E1/UBCH are contradictory. Required for transcriptional activation of Hox genes. This chain is E3 ubiquitin-protein ligase BRE1B (Rnf40), found in Rattus norvegicus (Rat).